A 544-amino-acid polypeptide reads, in one-letter code: Aspartokinase (544 aa).

The 73-residue stretch at 463–535 (LVGKQMVNFI…SAIGDSSAVD (73 aa)) folds into the ACT domain.

This sequence belongs to the aspartokinase family.

The enzyme catalyses L-aspartate + ATP = 4-phospho-L-aspartate + ADP. The protein operates within amino-acid biosynthesis; L-methionine biosynthesis via de novo pathway; L-homoserine from L-aspartate: step 1/3. It functions in the pathway amino-acid biosynthesis; L-threonine biosynthesis; L-threonine from L-aspartate: step 1/5. Phosphorylates aspartate, the first step in the biosynthesis of amino acids that derive from aspartate (the aspartate family of amino acids), including methioinine and threonine, the latter of which is a precursor to isoleucine. This Candida albicans (strain SC5314 / ATCC MYA-2876) (Yeast) protein is Aspartokinase.